Reading from the N-terminus, the 333-residue chain is PDZ domain-containing protein GIPC1 (333 aa).

Residues 1-11 (MPLGLGRRKKA) show a composition bias toward basic residues. The tract at residues 1-53 (MPLGLGRRKKAPPLVENEEAEPSRSGLGVGEPGPLGGSAAGESQMGLPPPPAA) is disordered. Residues 27–39 (LGVGEPGPLGGSA) are compositionally biased toward gly residues. Ser68 bears the Phosphoserine mark. In terms of domain architecture, PDZ spans 133–213 (EVEVFKSEEA…GRTFTLKLTE (81 aa)). Residues Ser222, Ser225, and Ser232 each carry the phosphoserine modification. Residues 223–244 (QRSAGGHPGSGPQLGTGRGTLR) are disordered. The span at 228–240 (GHPGSGPQLGTGR) shows a compositional bias: gly residues. A Phosphothreonine modification is found at Thr242. Position 247 is a phosphoserine (Ser247).

Belongs to the GIPC family. As to quaternary structure, interacts with GLUT1 (C-terminus), ACTN1, KIF1B, MYO6 and PLEKHG5. Interacts with RGS19 C-terminus. Interacts with SDC4/syndecan-4 and SEMA4C/semaphorin-4C. As to expression, widely expressed.

The protein localises to the cytoplasm. It is found in the membrane. Functionally, inhibits endothelial cell migration (in vitro). May be involved in G protein-linked signaling. The chain is PDZ domain-containing protein GIPC1 (Gipc1) from Mus musculus (Mouse).